The chain runs to 252 residues: Geranylgeranylglyceryl phosphate synthase (252 aa).

Residues aspartate 22 and serine 51 each contribute to the Mg(2+) site. Sn-glycerol 1-phosphate is bound by residues 170–176 (YFEAGSG), 201–202 (GG), and 223–224 (GS).

This sequence belongs to the GGGP/HepGP synthase family. Group II subfamily. Mg(2+) serves as cofactor.

Its subcellular location is the cytoplasm. The enzyme catalyses sn-glycerol 1-phosphate + (2E,6E,10E)-geranylgeranyl diphosphate = sn-3-O-(geranylgeranyl)glycerol 1-phosphate + diphosphate. Its pathway is membrane lipid metabolism; glycerophospholipid metabolism. Its function is as follows. Prenyltransferase that catalyzes the transfer of the geranylgeranyl moiety of geranylgeranyl diphosphate (GGPP) to the C3 hydroxyl of sn-glycerol-1-phosphate (G1P). This reaction is the first ether-bond-formation step in the biosynthesis of archaeal membrane lipids. The chain is Geranylgeranylglyceryl phosphate synthase from Thermoplasma volcanium (strain ATCC 51530 / DSM 4299 / JCM 9571 / NBRC 15438 / GSS1).